Consider the following 1087-residue polypeptide: Alpha-mannosidase G (1087 aa).

The Zn(2+) site is built by His-264, Asp-266, Asp-376, and His-579. Asp-376 serves as the catalytic Nucleophile.

This sequence belongs to the glycosyl hydrolase 38 family. The cofactor is Zn(2+).

The catalysed reaction is Hydrolysis of terminal, non-reducing alpha-D-mannose residues in alpha-D-mannosides.. The protein is Alpha-mannosidase G (manG) of Dictyostelium discoideum (Social amoeba).